The following is a 539-amino-acid chain: Transcription factor LG2 (539 aa).

The segment covering 115 to 125 (MRQQQQLHSGN) has biased composition (polar residues). Disordered stretches follow at residues 115–140 (MRQQQQLHSGNSQSVGSTTDSSSAQN) and 181–246 (KPGL…KSRL). 2 stretches are compositionally biased toward low complexity: residues 126–137 (SQSVGSTTDSSS) and 192–205 (QQQHQLQHHQQQQL). Residues 219–242 (TRKDGKSVDAKTERRLAQNREAAR) are compositionally biased toward basic and acidic residues. One can recognise a bZIP domain in the interval 227 to 271 (DAKTERRLAQNREAARKSRLRKKAYVQNLETSRVRLQQIEQELQR). The tract at residues 229–249 (KTERRLAQNREAARKSRLRKK) is basic motif. A leucine-zipper region spans residues 255–269 (LETSRVRLQQIEQEL). The region spanning 292–506 (AAMFDMEYAR…RALSNLWSSR (215 aa)) is the DOG1 domain. Positions 513-539 (GTESVSPTGTELQPMHNQPQQNQYSGF) are disordered.

Belongs to the bZIP family. In terms of assembly, interacts with NPR1/NH1 and NPR3/NH3.

It is found in the nucleus. Functionally, transcriptional regulator involved in defense response. Acts as a transcriptional activator in vitro. In Oryza sativa subsp. japonica (Rice), this protein is Transcription factor LG2.